Reading from the N-terminus, the 128-residue chain is uncharacterized protein (128 aa).

Disordered regions lie at residues 62–83 (LNPS…SPRV) and 101–128 (FAAS…RYQP). Over residues 101-114 (FAASSSSTAPVTVT) the composition is skewed to low complexity.

It localises to the cytoplasm. The protein resides in the nucleus. This is an uncharacterized protein from Saccharomyces cerevisiae (strain ATCC 204508 / S288c) (Baker's yeast).